Reading from the N-terminus, the 727-residue chain is 1,4-alpha-glucan branching enzyme GlgB (727 aa).

Aspartate 411 (nucleophile) is an active-site residue. Residue glutamate 464 is the Proton donor of the active site.

It belongs to the glycosyl hydrolase 13 family. GlgB subfamily. Monomer.

It carries out the reaction Transfers a segment of a (1-&gt;4)-alpha-D-glucan chain to a primary hydroxy group in a similar glucan chain.. It participates in glycan biosynthesis; glycogen biosynthesis. Functionally, catalyzes the formation of the alpha-1,6-glucosidic linkages in glycogen by scission of a 1,4-alpha-linked oligosaccharide from growing alpha-1,4-glucan chains and the subsequent attachment of the oligosaccharide to the alpha-1,6 position. This is 1,4-alpha-glucan branching enzyme GlgB from Protochlamydia amoebophila (strain UWE25).